A 350-amino-acid chain; its full sequence is Nicotinate-nucleotide--dimethylbenzimidazole phosphoribosyltransferase (350 aa).

Glutamate 316 serves as the catalytic Proton acceptor.

It belongs to the CobT family.

The catalysed reaction is 5,6-dimethylbenzimidazole + nicotinate beta-D-ribonucleotide = alpha-ribazole 5'-phosphate + nicotinate + H(+). The protein operates within nucleoside biosynthesis; alpha-ribazole biosynthesis; alpha-ribazole from 5,6-dimethylbenzimidazole: step 1/2. Functionally, catalyzes the synthesis of alpha-ribazole-5'-phosphate from nicotinate mononucleotide (NAMN) and 5,6-dimethylbenzimidazole (DMB). The polypeptide is Nicotinate-nucleotide--dimethylbenzimidazole phosphoribosyltransferase (Bradyrhizobium diazoefficiens (strain JCM 10833 / BCRC 13528 / IAM 13628 / NBRC 14792 / USDA 110)).